A 74-amino-acid polypeptide reads, in one-letter code: uncharacterized protein (74 aa).

Residues 39–74 (SSPQAPGTLKPRALVRPSPGPVQENHLSEAQFPPKL) form a disordered region.

This is an uncharacterized protein from Homo sapiens (Human).